A 652-amino-acid chain; its full sequence is Acetyl-coenzyme A synthetase (652 aa).

Residues 189–192 (RGGK), T311, and N335 each bind CoA. ATP is bound by residues 387 to 389 (GEP), 411 to 416 (DTWWQT), D500, and R515. S523 serves as a coordination point for CoA. ATP is bound at residue R526. 3 residues coordinate Mg(2+): V537, H539, and V542. R584 is a binding site for CoA. K609 carries the post-translational modification N6-acetyllysine.

The protein belongs to the ATP-dependent AMP-binding enzyme family. It depends on Mg(2+) as a cofactor. Post-translationally, acetylated. Deacetylation by the SIR2-homolog deacetylase activates the enzyme.

The catalysed reaction is acetate + ATP + CoA = acetyl-CoA + AMP + diphosphate. Its function is as follows. Catalyzes the conversion of acetate into acetyl-CoA (AcCoA), an essential intermediate at the junction of anabolic and catabolic pathways. AcsA undergoes a two-step reaction. In the first half reaction, AcsA combines acetate with ATP to form acetyl-adenylate (AcAMP) intermediate. In the second half reaction, it can then transfer the acetyl group from AcAMP to the sulfhydryl group of CoA, forming the product AcCoA. This chain is Acetyl-coenzyme A synthetase, found in Rhizobium rhizogenes (strain K84 / ATCC BAA-868) (Agrobacterium radiobacter).